Consider the following 328-residue polypeptide: Sulfate adenylyltransferase subunit 2 (328 aa).

Disordered stretches follow at residues 15–34 and 304–328; these read AAPDLADLGGEPARARPSSH and SEREGRVIDRDSTASMERKKAEGYF.

Belongs to the PAPS reductase family. CysD subfamily. In terms of assembly, heterodimer composed of CysD, the smaller subunit, and CysN.

The catalysed reaction is sulfate + ATP + H(+) = adenosine 5'-phosphosulfate + diphosphate. It participates in sulfur metabolism; hydrogen sulfide biosynthesis; sulfite from sulfate: step 1/3. Functionally, with CysN forms the ATP sulfurylase (ATPS) that catalyzes the adenylation of sulfate producing adenosine 5'-phosphosulfate (APS) and diphosphate, the first enzymatic step in sulfur assimilation pathway. APS synthesis involves the formation of a high-energy phosphoric-sulfuric acid anhydride bond driven by GTP hydrolysis by CysN coupled to ATP hydrolysis by CysD. The sequence is that of Sulfate adenylyltransferase subunit 2 from Rhodopseudomonas palustris (strain BisA53).